We begin with the raw amino-acid sequence, 28 residues long: Glutathione S-transferase 5 (28 aa).

In terms of domain architecture, GST N-terminal spans 1-28; it reads PNYKLTYFNLRGRAEISRYLFAYAGIKY. Y7 lines the glutathione pocket.

This sequence belongs to the GST superfamily. Sigma family. In terms of assembly, homodimer.

It is found in the cytoplasm. The enzyme catalyses RX + glutathione = an S-substituted glutathione + a halide anion + H(+). Functionally, conjugation of reduced glutathione to a wide number of exogenous and endogenous hydrophobic electrophiles. The protein is Glutathione S-transferase 5 of Gallus gallus (Chicken).